A 424-amino-acid polypeptide reads, in one-letter code: Dihydroorotase (424 aa).

Histidine 61 and histidine 63 together coordinate Zn(2+). Substrate-binding positions include 63 to 65 and asparagine 95; that span reads HLR. Zn(2+) is bound by residues aspartate 153, histidine 180, and histidine 233. Residue asparagine 279 participates in substrate binding. Aspartate 306 contacts Zn(2+). The active site involves aspartate 306. Histidine 310 provides a ligand contact to substrate.

It belongs to the metallo-dependent hydrolases superfamily. DHOase family. Class I DHOase subfamily. Zn(2+) is required as a cofactor.

It catalyses the reaction (S)-dihydroorotate + H2O = N-carbamoyl-L-aspartate + H(+). Its pathway is pyrimidine metabolism; UMP biosynthesis via de novo pathway; (S)-dihydroorotate from bicarbonate: step 3/3. Its function is as follows. Catalyzes the reversible cyclization of carbamoyl aspartate to dihydroorotate. The chain is Dihydroorotase from Geobacter metallireducens (strain ATCC 53774 / DSM 7210 / GS-15).